The primary structure comprises 159 residues: Phosphopantetheine adenylyltransferase (159 aa).

A substrate-binding site is contributed by Ser-8. Residues 8–9 and His-16 each bind ATP; that span reads SF. Substrate-binding residues include Lys-40, Thr-72, and Arg-86. ATP-binding positions include 87-89, Glu-97, and 122-128; these read GLR and YSFLSSS.

It belongs to the bacterial CoaD family. As to quaternary structure, homohexamer. Mg(2+) serves as cofactor.

It localises to the cytoplasm. The catalysed reaction is (R)-4'-phosphopantetheine + ATP + H(+) = 3'-dephospho-CoA + diphosphate. It participates in cofactor biosynthesis; coenzyme A biosynthesis; CoA from (R)-pantothenate: step 4/5. In terms of biological role, reversibly transfers an adenylyl group from ATP to 4'-phosphopantetheine, yielding dephospho-CoA (dPCoA) and pyrophosphate. The polypeptide is Phosphopantetheine adenylyltransferase (Synechocystis sp. (strain ATCC 27184 / PCC 6803 / Kazusa)).